Here is a 323-residue protein sequence, read N- to C-terminus: Beta-ketoacyl-[acyl-carrier-protein] synthase III (323 aa).

Residues Cys113 and His250 contribute to the active site. The tract at residues 251-255 (QANLR) is ACP-binding. Asn280 is a catalytic residue.

The protein belongs to the thiolase-like superfamily. FabH family. In terms of assembly, homodimer.

The protein localises to the cytoplasm. The enzyme catalyses malonyl-[ACP] + acetyl-CoA + H(+) = 3-oxobutanoyl-[ACP] + CO2 + CoA. It participates in lipid metabolism; fatty acid biosynthesis. Its function is as follows. Catalyzes the condensation reaction of fatty acid synthesis by the addition to an acyl acceptor of two carbons from malonyl-ACP. Catalyzes the first condensation reaction which initiates fatty acid synthesis and may therefore play a role in governing the total rate of fatty acid production. Possesses both acetoacetyl-ACP synthase and acetyl transacylase activities. Its substrate specificity determines the biosynthesis of branched-chain and/or straight-chain of fatty acids. This Paracoccus denitrificans (strain Pd 1222) protein is Beta-ketoacyl-[acyl-carrier-protein] synthase III.